The chain runs to 318 residues: Aspartate carbamoyltransferase catalytic subunit (318 aa).

The carbamoyl phosphate site is built by Arg-58 and Thr-59. Lys-86 provides a ligand contact to L-aspartate. The carbamoyl phosphate site is built by Arg-108, His-141, and Gln-144. L-aspartate contacts are provided by Arg-174 and Arg-226. Positions 270 and 271 each coordinate carbamoyl phosphate.

It belongs to the aspartate/ornithine carbamoyltransferase superfamily. ATCase family. In terms of assembly, heterododecamer (2C3:3R2) of six catalytic PyrB chains organized as two trimers (C3), and six regulatory PyrI chains organized as three dimers (R2).

The enzyme catalyses carbamoyl phosphate + L-aspartate = N-carbamoyl-L-aspartate + phosphate + H(+). It participates in pyrimidine metabolism; UMP biosynthesis via de novo pathway; (S)-dihydroorotate from bicarbonate: step 2/3. Functionally, catalyzes the condensation of carbamoyl phosphate and aspartate to form carbamoyl aspartate and inorganic phosphate, the committed step in the de novo pyrimidine nucleotide biosynthesis pathway. In Lactobacillus delbrueckii subsp. bulgaricus (strain ATCC BAA-365 / Lb-18), this protein is Aspartate carbamoyltransferase catalytic subunit.